Consider the following 309-residue polypeptide: Taste receptor type 2 member 43 (309 aa).

Position 1 (Met-1) is a topological domain, extracellular. The chain crosses the membrane as a helical span at residues Ile-2–Phe-22. Residues Ala-23–Gln-46 are Cytoplasmic-facing. A helical membrane pass occupies residues Ile-47–Tyr-67. At Ser-68 to Asn-86 the chain is on the extracellular side. The helical transmembrane segment at Ile-87 to Leu-107 threads the bilayer. Topologically, residues Leu-108–Lys-126 are cytoplasmic. Residues Ser-127 to Ile-147 traverse the membrane as a helical segment. Topologically, residues Asn-148 to Thr-178 are extracellular. 2 N-linked (GlcNAc...) asparagine glycosylation sites follow: Asn-161 and Asn-176. The helical transmembrane segment at Val-179–Ile-199 threads the bilayer. Residues Cys-200–Gln-229 lie on the Cytoplasmic side of the membrane. A helical membrane pass occupies residues Thr-230–Trp-250. Over Ser-251–Pro-259 the chain is Extracellular. A helical transmembrane segment spans residues Val-260 to Ile-280. The Cytoplasmic segment spans residues Trp-281–Pro-309.

This sequence belongs to the G-protein coupled receptor T2R family. As to expression, expressed in subsets of taste receptor cells of the tongue and exclusively in gustducin-positive cells. Expressed in airway epithelia.

It localises to the membrane. The protein localises to the cell projection. The protein resides in the cilium membrane. Functionally, gustducin-coupled receptor immplicated in the perception of bitter compounds in the oral cavity and the gastrointestinal tract. Signals through PLCB2 and the calcium-regulated cation channel TRPM5. Activated by the sulfonyl amide sweeteners saccharin and acesulfame K. In airway epithelial cells, binding of bitter compounds increases the intracellular calcium ion concentration and stimulates ciliary beat frequency. May act as chemosensory receptors in airway epithelial cells to detect and eliminate potential noxious agents from the airways. This is Taste receptor type 2 member 43 (TAS2R43) from Homo sapiens (Human).